Consider the following 829-residue polypeptide: MEFFGMGYNFKLVEQEIQKRWDFKIAGNDGINCYVLGMFPYPSGNIHMGHIRNYTIGDVIARYKRAHGLKVLHPIGWDAFGLPAENAALSYGVNPAVWTERNIESMRKQLKSIGISYNWDRELATCKEDYYKHEQAFFLDFLQQGLAYRKESWVNWDPVDNTVLANEQVVDGRGWRSGAKIERRKLSQWFLKITDFADSLLDGLKTLDGWPEKVKLMQERWIGKTEGVILEFATSCGQKLEVFSTMPHMLFGASFCAVSAEHPILRHVTDEAFSARVRGIIECSGDEEKQKIGADTGLFATHPLLDRKLPIYAANYVLSEYGTGAVFGCPAHDQRDFEFAVAHGLDIYQVVFPDDGVQYDLQKEAYSGDGTYRNSEFLNGLRVDAARNAMIQKLESMGGCRRVTNYRLHDWGISRQRYWGCPIPVVHCEKCGIVPVDRQDLPISLPEEVDFSRGGNPLDHHPTWKHVQCPKCQSSAQRETDTFDTFFESSWYFAAFCSEQGGINAADCNKLLPVDYYIGGVEHAVLHLLYARFFCRALKKCGHLAVEEPFRNLITQGMVCHSVYRDAAGNYLFPEDAQRMIRDGEAVQRGKVEKMSKSKKNVVDPSHIIKKYGADTVRLFMLSDTPPERDIEWSDVGVEGAWRYLERLWRLFEDNSSIGADFDTADVKAEDRVYLSGIHKLLRGLSADMEHCRLNCAVAKFREMSNTVFEMVKCGVSQQVINESVCILLRVMEPFIPHIAEKLWERIGGEGMLCNRQWPSAREDLLTEDLVTIAVQVNGKLCSTLKVGAQCDGEEVKAEALKVAQRKLGDKEVRNIYFVPGRVVNIVTK.

The short motif at 40–50 is the 'HIGH' region element; it reads PYPSGNIHMGH. The 'KMSKS' region motif lies at 594–598; that stretch reads KMSKS. An ATP-binding site is contributed by Lys597.

This sequence belongs to the class-I aminoacyl-tRNA synthetase family.

It is found in the cytoplasm. It carries out the reaction tRNA(Leu) + L-leucine + ATP = L-leucyl-tRNA(Leu) + AMP + diphosphate. This is Leucine--tRNA ligase from Anaplasma marginale (strain St. Maries).